The sequence spans 265 residues: Insulin-like growth factor-binding protein 2-B (265 aa).

A signal peptide spans 1 to 17 (MSLALLCSLLLVHGSLG). In terms of domain architecture, IGFBP N-terminal spans 19 to 99 (IVFRCPSCTA…IQGLGRCENK (81 aa)). 6 disulfides stabilise this stretch: C23-C49, C26-C51, C34-C52, C41-C55, C63-C76, and C70-C96. Residues 107 to 122 (TNQESAAHSGEVNGTR) are compositionally biased toward polar residues. Disordered regions lie at residues 107-128 (TNQESAAHSGEVNGTRSPPMKK) and 144-170 (HHNNKRTRMYNTQDDPKTPHPKQSQCQ). The region spanning 166–248 (QSQCQQELDK…SDKVRGDPNC (83 aa)) is the Thyroglobulin type-1 domain. Intrachain disulfides connect C169/C203, C214/C225, and C227/C248. The tract at residues 238–265 (SSDKVRGDPNCSQYYGGPELEPPTAQQK) is disordered. The Cell attachment site motif lies at 243–245 (RGD).

In terms of assembly, interacts with igf2. Interacts with igf1. In early embryos, expressed at a low level in most tissues with expression becoming abundant in the liver by 96 hours post-fertilization (hpf). The expression pattern in adults exhibits sexual dimorphism; in adult males expression is limited exclusively to the liver whereas in adult females expression is observed in the liver and other tissues including the gut, kidney, ovary and muscle.

The protein localises to the secreted. In terms of biological role, IGF-binding proteins prolong the half-life of the IGFs and have been shown to either inhibit or stimulate the growth promoting effects of the IGFs on cell culture. They alter the interaction of IGFs with their cell surface receptors. This Danio rerio (Zebrafish) protein is Insulin-like growth factor-binding protein 2-B.